The primary structure comprises 467 residues: Metal transporter cnnm-4 (467 aa).

Residues 1-110 are Extracellular-facing; that stretch reads MELYAAGRYD…EIPEGKDKTR (110 aa). A glycan (N-linked (GlcNAc...) asparagine) is linked at Asn61. The CNNM transmembrane domain occupies 107–293; the sequence is DKTRVYFMMP…LEDEEAADGN (187 aa). Residues 111–131 form a helical membrane-spanning segment; that stretch reads VYFMMPLLVLCLGLSATFSGL. Residues 132–170 are Cytoplasmic-facing; sequence NLAIMSFSINDLKLIQESDSDKLMKQRAMDVMRLRRNSN. The helical transmembrane segment at 171–191 threads the bilayer; the sequence is FVLVTIIFGNCFCNISITLLM. Residues 192-196 lie on the Extracellular side of the membrane; the sequence is NYFAE. The chain crosses the membrane as a helical span at residues 197–217; it reads FYGFGGFIFVELISTALLLIF. Residues 218-238 are Cytoplasmic-facing; it reads TEILPSLIFTKNALAIASRLQ. The helical transmembrane segment at 239-259 threads the bilayer; that stretch reads YFVIFTMCITSPISYPLAMLL. Over 260 to 467 the chain is Extracellular; it reads NIILGKENAD…IFDEKDARQE (208 aa). 2 consecutive CBS domains span residues 317-381 and 394-461; these read MTEI…GSDT and KRRK…IFDE. Residue Asn364 is glycosylated (N-linked (GlcNAc...) asparagine).

The protein belongs to the ACDP family.

The protein localises to the cell membrane. Its function is as follows. Probable metal transporter. Probably acts redundantly with the other metal transport proteins cnnm-1, cnnm-2, cnnm-3 and cnnm-5 to regulate Mg(2+) homeostasis. The protein is Metal transporter cnnm-4 of Caenorhabditis elegans.